The sequence spans 281 residues: Ribosomal protein L11 methyltransferase (281 aa).

S-adenosyl-L-methionine-binding residues include Thr-133, Gly-154, Asp-175, and Asn-216.

This sequence belongs to the methyltransferase superfamily. PrmA family.

Its subcellular location is the cytoplasm. It catalyses the reaction L-lysyl-[protein] + 3 S-adenosyl-L-methionine = N(6),N(6),N(6)-trimethyl-L-lysyl-[protein] + 3 S-adenosyl-L-homocysteine + 3 H(+). Its function is as follows. Methylates ribosomal protein L11. This is Ribosomal protein L11 methyltransferase from Campylobacter jejuni (strain RM1221).